The following is a 114-amino-acid chain: MNLILLLVIGFLVFIGTYMILSINLIRIVIGISIYTHAGNLIIMSMGKYGPHMSEPLIQGHAQNFVDPLLQAIVLTAIVIGFGMTAFLLVLIYRTYRVTKEDEISALKGDEDDE.

A run of 3 helical transmembrane segments spans residues 3 to 23 (LILL…ILSI), 25 to 45 (LIRI…IIMS), and 72 to 92 (AIVL…LVLI).

Belongs to the CPA3 antiporters (TC 2.A.63) subunit C family. As to quaternary structure, may form a heterooligomeric complex that consists of seven subunits: mnhA2, mnhB2, mnhC2, mnhD2, mnhE2, mnhF2 and mnhG2.

The protein resides in the cell membrane. The sequence is that of Putative antiporter subunit mnhC2 (mnhC2) from Staphylococcus epidermidis (strain ATCC 12228 / FDA PCI 1200).